The primary structure comprises 362 residues: P2Y purinoceptor 1 (362 aa).

The Extracellular segment spans residues 1–40 (MTEALISAALNGTQPELLAGGWAAGNATTKCSLTKTGFQF). 2 N-linked (GlcNAc...) asparagine glycosylation sites follow: asparagine 11 and asparagine 26. Intrachain disulfides connect cysteine 31–cysteine 285 and cysteine 113–cysteine 191. Lysine 35 serves as a coordination point for ADP. A helical transmembrane segment spans residues 41–63 (YYLPTVYILVFITGFLGNSVAIW). At 64-76 (MFVFHMRPWSGIS) the chain is on the cytoplasmic side. A helical transmembrane segment spans residues 77–98 (VYMFNLALADFLYVLTLPALIF). Residues 99–114 (YYFNKTDWIFGDVMCK) lie on the Extracellular side of the membrane. The N-linked (GlcNAc...) asparagine glycan is linked to asparagine 102. Residues 115 to 136 (LQRFIFHVNLYGSILFLTCISV) form a helical membrane-spanning segment. Over 137–155 (HRYTGVVHPLKSLGRLKKK) the chain is Cytoplasmic. Residues 156-177 (NAVYVSSLVWALVVAVIAPILF) traverse the membrane as a helical segment. Over 178–203 (YSGTGVRRNKTITCYDTTADEYLRSY) the chain is Extracellular. Asparagine 186 carries N-linked (GlcNAc...) asparagine glycosylation. ADP is bound at residue 192-194 (YDT). The chain crosses the membrane as a helical span at residues 204 to 226 (FVYSMCTTVFMFCIPFIVILGCY). The Cytoplasmic portion of the chain corresponds to 227 to 249 (GLIVKALIYKDLDNSPLRRKSIY). A helical membrane pass occupies residues 250 to 273 (LVIIVLTVFAVSYLPFHVMKTLNL). ADP-binding positions include 272–276 (NLRAR), 292–295 (YATY), and arginine 299. At 274–292 (RARLDFQTPQMCAFNDKVY) the chain is on the extracellular side. A helical membrane pass occupies residues 293–314 (ATYQVTRGLASLNSCVDPILYF). The Cytoplasmic portion of the chain corresponds to 315 to 362 (LAGDTFRRRLSRATRKSSRRSEPNVQSKSEEMTLNILTEYKQNGDTSL).

This sequence belongs to the G-protein coupled receptor 1 family. In terms of tissue distribution, brain, spinal cord, gastrointestinal tract, spleen and leg muscle. Is not detected in the heart, liver, stomach, lung and kidney.

Its subcellular location is the cell membrane. Its function is as follows. Receptor for extracellular adenine nucleotides such as ADP. In platelets, binding to ADP leads to mobilization of intracellular calcium ions via activation of phospholipase C, a change in platelet shape, and ultimately platelet aggregation. The protein is P2Y purinoceptor 1 (P2RY1) of Gallus gallus (Chicken).